Consider the following 247-residue polypeptide: MSVTMREMLEAGVHFGHQTRFWNPKMAPFIFGHRNKIHIINLEKTLPMYLDALKYVRQLAANRGTILFVGTKRQSREILAEEAARAGMPYVDSRWLGGMLTNFKTVKISIKRLKDMEAAKEAGALESMSKKEALMFEREMEKLEKSIGGIKDMGGIPDAIFVVDVGYHKIAVTEAAKLGIPVIGVVDTNHSPEGIDYVIPGNDDSSKAVALYVRGVADAILEGRANAVQEVVEAARGGDDFVEVQEG.

Belongs to the universal ribosomal protein uS2 family.

The protein is Small ribosomal subunit protein uS2 of Ralstonia nicotianae (strain ATCC BAA-1114 / GMI1000) (Ralstonia solanacearum).